The following is a 301-amino-acid chain: Mitochondrial carnitine/acylcarnitine carrier protein (301 aa).

Alanine 2 bears the N-acetylalanine mark. The Cytoplasmic portion of the chain corresponds to 2–12 (AEEPKPISPLK). 3 Solcar repeats span residues 8–99 (ISPL…GKRL), 108–196 (LTYP…LKNL), and 207–293 (LSVP…PMKI). A helical membrane pass occupies residues 13 to 31 (NLLAGGFGGVCLVFVGHPL). The Mitochondrial matrix segment spans residues 32–73 (DTVKVRLQTQPPSLPGQPPMYSGTIDCFRKTLFREGITGLYR). Residues 74–93 (GMAAPIIGVTPMFAVCFFGF) form a helical membrane-spanning segment. Residues 94-112 (GLGKRLQQKSPEDELTYPQ) lie on the Cytoplasmic side of the membrane. Residues 113–131 (LFTAGMLSGVFTTGIMTPG) form a helical membrane-spanning segment. The Mitochondrial matrix segment spans residues 132–170 (ERIKCLLQIQASSGKNKYSGTLDCAKKLYQEFGIRGFYK). Lysine 148 and lysine 157 each carry N6-acetyllysine. Residue lysine 170 is modified to N6-acetyllysine; alternate. The residue at position 170 (lysine 170) is an N6-succinyllysine; alternate. A helical transmembrane segment spans residues 171-190 (GTALTLMRDVPASGMYFMTY). Residues 191-211 (EWLKNLFTPQGKSVHDLSVPR) lie on the Cytoplasmic side of the membrane. Residues 212-230 (VLVAGGFRGIFNWVVAIPP) traverse the membrane as a helical segment. Residues 231–267 (DVLKSRFQTAPPGKYPNGFRDVLRELIREEGVTSLYK) are Mitochondrial matrix-facing. Residues 268–287 (GFNAVMIRAFPANAACFLGF) form a helical membrane-spanning segment. Residues 288-301 (EIPMKILNWIAPNL) lie on the Cytoplasmic side of the membrane.

Belongs to the mitochondrial carrier (TC 2.A.29) family. Post-translationally, the N-terminus is blocked.

It localises to the mitochondrion inner membrane. The enzyme catalyses O-acetyl-(R)-carnitine(in) + (R)-carnitine(out) = O-acetyl-(R)-carnitine(out) + (R)-carnitine(in). The catalysed reaction is an O-acyl-(R)-carnitine(in) + (R)-carnitine(out) = an O-acyl-(R)-carnitine(out) + (R)-carnitine(in). It carries out the reaction O-propanoyl-(R)-carnitine(in) + (R)-carnitine(out) = O-propanoyl-(R)-carnitine(out) + (R)-carnitine(in). It catalyses the reaction O-hexadecanoyl-(R)-carnitine(in) + (R)-carnitine(out) = O-hexadecanoyl-(R)-carnitine(out) + (R)-carnitine(in). The enzyme catalyses O-octanoyl-(R)-carnitine(in) + (R)-carnitine(out) = O-octanoyl-(R)-carnitine(out) + (R)-carnitine(in). The catalysed reaction is (R)-carnitine(in) = (R)-carnitine(out). In terms of biological role, mediates the electroneutral exchange of acylcarnitines (O-acyl-(R)-carnitine or L-acylcarnitine) of different acyl chain lengths (ranging from O-acetyl-(R)-carnitine to long-chain O-acyl-(R)-carnitines) with free carnitine ((R)-carnitine or L-carnitine) across the mitochondrial inner membrane, via a ping-pong mechanism. Key player in the mitochondrial oxidation pathway, it translocates the fatty acids in the form of acylcarnitines into the mitochondrial matrix, where the carnitine palmitoyltransferase 2 (CPT-2) activates them to undergo fatty acid beta-oxidation. Catalyzes the unidirectional transport (uniport) of carnitine at lower rates than the antiport (exchange). This Rattus norvegicus (Rat) protein is Mitochondrial carnitine/acylcarnitine carrier protein.